The sequence spans 329 residues: 31 kDa immunogenic protein (329 aa).

An N-terminal signal peptide occupies residues 1–28 (MKFGSKIRRLAVAAVAGAIALGASFAVA).

This is 31 kDa immunogenic protein (bcsP31) from Brucella abortus biovar 1 (strain 9-941).